The chain runs to 346 residues: Large ribosomal subunit protein uL10 (346 aa).

The tract at residues 307 to 346 (AAAVAKEPEKKEEVKEEEEEEEEEDHSEEDGMAGLGSLFG) is disordered. A compositionally biased stretch (acidic residues) spans 321-337 (KEEEEEEEEEDHSEEDG).

This sequence belongs to the universal ribosomal protein uL10 family. In terms of assembly, part of the 50S ribosomal subunit. Forms part of the ribosomal stalk which helps the ribosome interact with GTP-bound translation factors. Forms both a pentameric L10(L12)2(L12)2 and heptameric L10(L12)2(L12)2(L12)2 complex, where L10 forms an elongated spine to which the L12 dimers bind in a sequential fashion. The proportion of heptameric complexes increases during cell growth.

Its function is as follows. Forms part of the ribosomal stalk, playing a central role in the interaction of the ribosome with GTP-bound translation factors. In Methanosarcina barkeri (strain Fusaro / DSM 804), this protein is Large ribosomal subunit protein uL10.